Reading from the N-terminus, the 379-residue chain is Putative phosphatidate phosphatase (379 aa).

The segment at 1–53 is disordered; that stretch reads MPAVKIIMSTETSASETTPLRRSENETPDHKELAQSNSNSRQTTVNSNNNNYS. The span at 9 to 18 shows a compositional bias: polar residues; it reads STETSASETT. Over residues 19–33 the composition is skewed to basic and acidic residues; the sequence is PLRRSENETPDHKEL. Over residues 35 to 53 the composition is skewed to low complexity; sequence QSNSNSRQTTVNSNNNNYS. The N-linked (GlcNAc...) asparagine glycan is linked to N51. The next 2 membrane-spanning stretches (helical) occupy residues 90 to 110 and 138 to 158; these read VGLDVLILLCAGFPILLFFLL and MLYFIGAVIPVGVIFIVEVII. The N-linked (GlcNAc...) asparagine glycan is linked to N169. The next 2 membrane-spanning stretches (helical) occupy residues 266 to 286 and 330 to 350; these read SFPSGHSSFTFFAMVYLALYL and AGSLIGSISALVVANYVSDLF.

This sequence belongs to the PA-phosphatase related phosphoesterase family. As to quaternary structure, homodimer. This complex seems not to be involved in substrate recognition, it may confer only structural or functional stability. As to expression, expressed in embryonic gut in a pattern that guides germ cells towards mesoderm (initially in hindgut and then on lower side of gut). During extended germ band stage, expressed in ectoderm as a medial band throughout the trunk.

The protein localises to the membrane. The enzyme catalyses a 1,2-diacyl-sn-glycero-3-phosphate + H2O = a 1,2-diacyl-sn-glycerol + phosphate. In terms of biological role, responsible for guiding the germ cells early in the process of migration from the lumen of the developing gut towards the overlying mesoderm, where the germ cells enter the gonads. May be involved in lipid metabolism. The protein is Putative phosphatidate phosphatase (wun) of Drosophila melanogaster (Fruit fly).